We begin with the raw amino-acid sequence, 508 residues long: Photosystem II CP47 reaction center protein (508 aa).

The next 6 helical transmembrane spans lie at 21–36 (AVHL…WAGS), 101–115 (IILS…IWHW), 140–156 (GIHL…FGAF), 203–218 (IAAG…FHLS), 237–252 (VLSS…AFVV), and 457–472 (NFAL…HGSR).

This sequence belongs to the PsbB/PsbC family. PsbB subfamily. PSII is composed of 1 copy each of membrane proteins PsbA, PsbB, PsbC, PsbD, PsbE, PsbF, PsbH, PsbI, PsbJ, PsbK, PsbL, PsbM, PsbT, PsbX, PsbY, PsbZ, Psb30/Ycf12, at least 3 peripheral proteins of the oxygen-evolving complex and a large number of cofactors. It forms dimeric complexes. Requires Binds multiple chlorophylls. PSII binds additional chlorophylls, carotenoids and specific lipids. as cofactor.

It is found in the plastid. Its subcellular location is the chloroplast thylakoid membrane. One of the components of the core complex of photosystem II (PSII). It binds chlorophyll and helps catalyze the primary light-induced photochemical processes of PSII. PSII is a light-driven water:plastoquinone oxidoreductase, using light energy to abstract electrons from H(2)O, generating O(2) and a proton gradient subsequently used for ATP formation. The chain is Photosystem II CP47 reaction center protein from Staurastrum punctulatum (Green alga).